The primary structure comprises 354 residues: NADH-quinone oxidoreductase subunit H (354 aa).

Transmembrane regions (helical) follow at residues 25-45, 91-111, 126-146, 170-190, 205-225, 267-287, 290-310, and 330-350; these read LVRI…LILW, WIYL…WAVI, LLYA…AGWA, MGFA…SGIV, FLSW…ISGI, IVIS…PFGF, FVPG…VFIW, and IFIP…MSPL.

It belongs to the complex I subunit 1 family. NDH-1 is composed of 14 different subunits. Subunits NuoA, H, J, K, L, M, N constitute the membrane sector of the complex.

The protein localises to the cell inner membrane. The enzyme catalyses a quinone + NADH + 5 H(+)(in) = a quinol + NAD(+) + 4 H(+)(out). In terms of biological role, NDH-1 shuttles electrons from NADH, via FMN and iron-sulfur (Fe-S) centers, to quinones in the respiratory chain. The immediate electron acceptor for the enzyme in this species is believed to be ubiquinone. Couples the redox reaction to proton translocation (for every two electrons transferred, four hydrogen ions are translocated across the cytoplasmic membrane), and thus conserves the redox energy in a proton gradient. This subunit may bind ubiquinone. The chain is NADH-quinone oxidoreductase subunit H from Paraburkholderia phytofirmans (strain DSM 17436 / LMG 22146 / PsJN) (Burkholderia phytofirmans).